The chain runs to 117 residues: MGIKYSSKINKIRTFALSLIFVGVIVMYLGLFFRTSPIIMTLFMVLGLLFLVASGIVYFWIGTLSTRAVQVVCPSCGKVTKMLGRVDLCMFCREPLTLDRELEGKEFDEKYNKKRKN.

2 consecutive transmembrane segments (helical) span residues I12–F32 and L42–G62.

It belongs to the UPF0295 family.

It localises to the cell membrane. The sequence is that of UPF0295 protein GTNG_0491 from Geobacillus thermodenitrificans (strain NG80-2).